Consider the following 146-residue polypeptide: Large ribosomal subunit protein bL21 (146 aa).

The tract at residues 96–146 (KKKTRRKMGHRQELTRVMVKSISITNSTPKTSSKTEVKKKSTSPKASNPEN) is disordered.

This sequence belongs to the bacterial ribosomal protein bL21 family. In terms of assembly, part of the 50S ribosomal subunit. Contacts protein L20.

This protein binds to 23S rRNA in the presence of protein L20. This is Large ribosomal subunit protein bL21 from Prochlorococcus marinus subsp. pastoris (strain CCMP1986 / NIES-2087 / MED4).